The sequence spans 447 residues: MTKVITRFAPSPTGMLHVGNIRVALLNWLYAKKHNGQFILRFDDTDLERSKQEYKDAIKDDLKFLNLHWDQTFNQLSRLSRYDEIKNLLLDKKRLYACYETPDELELKRKFQLSKGLPPMYDRASLNLTEEQTEKYIEQGRNPHYRFLVNHEPISWHDMIKGEIQYDGKALSDPIVIRADGSMTYMLCSVIDDIDYDITHIIRGEDHVSNTAIQIQMFEALNNTPTTFGHLSLIINKDEKISKRVGGFEITTLRKEIGIEAMAIASFFSLLGSSAQILPYKSMEKLINQFEISSFSKSPTIYQPKDLERLNHKLLISLDFDEVKDHLKEIDAEYIDENFWLSIRPNLQKLRDVKDWWEICHHTPNVESLNLDQEYLKQAAELLPQGAITKDSWSIWTKEITNITGRKGKELFLPLRLALTGRESGPEIADVLPLISREEIVKRLTSA.

A 'HIGH' region motif is present at residues 10 to 20 (PSPTGMLHVGN). A 'KMSKS' region motif is present at residues 240–244 (KISKR). Position 243 (Lys243) interacts with ATP.

The protein belongs to the class-I aminoacyl-tRNA synthetase family. Glutamate--tRNA ligase type 1 subfamily. Monomer.

It is found in the cytoplasm. The catalysed reaction is tRNA(Glu) + L-glutamate + ATP = L-glutamyl-tRNA(Glu) + AMP + diphosphate. In terms of biological role, catalyzes the attachment of glutamate to tRNA(Glu) in a two-step reaction: glutamate is first activated by ATP to form Glu-AMP and then transferred to the acceptor end of tRNA(Glu). This Rickettsia akari (strain Hartford) protein is Glutamate--tRNA ligase 1.